The primary structure comprises 290 residues: Glutamate racemase (290 aa).

Residues Asp24–Ser25 and Tyr56–Gly57 contribute to the substrate site. Cys87 serves as the catalytic Proton donor/acceptor. Substrate is bound at residue Asn88–Thr89. Cys199 functions as the Proton donor/acceptor in the catalytic mechanism. Thr200–His201 lines the substrate pocket. Positions Gly271 to Thr290 are disordered.

This sequence belongs to the aspartate/glutamate racemases family.

The enzyme catalyses L-glutamate = D-glutamate. It participates in cell wall biogenesis; peptidoglycan biosynthesis. Provides the (R)-glutamate required for cell wall biosynthesis. The sequence is that of Glutamate racemase from Deinococcus radiodurans (strain ATCC 13939 / DSM 20539 / JCM 16871 / CCUG 27074 / LMG 4051 / NBRC 15346 / NCIMB 9279 / VKM B-1422 / R1).